Consider the following 419-residue polypeptide: Glutamyl-tRNA reductase (419 aa).

Substrate is bound by residues 49-52 (TCNR), Ser107, 112-114 (EPQ), and Gln118. Cys50 serves as the catalytic Nucleophile. An NADP(+)-binding site is contributed by 187 to 192 (GAGETI).

Belongs to the glutamyl-tRNA reductase family. Homodimer.

It carries out the reaction (S)-4-amino-5-oxopentanoate + tRNA(Glu) + NADP(+) = L-glutamyl-tRNA(Glu) + NADPH + H(+). It participates in porphyrin-containing compound metabolism; protoporphyrin-IX biosynthesis; 5-aminolevulinate from L-glutamyl-tRNA(Glu): step 1/2. In terms of biological role, catalyzes the NADPH-dependent reduction of glutamyl-tRNA(Glu) to glutamate 1-semialdehyde (GSA). In Vibrio atlanticus (strain LGP32) (Vibrio splendidus (strain Mel32)), this protein is Glutamyl-tRNA reductase.